The chain runs to 528 residues: G patch domain-containing protein 2 (528 aa).

The interval 36–119 (LEESSEQARG…NKKDHSDSDD (84 aa)) is disordered. Residues 63–77 (RQARKRRGRKRRSYN) are compositionally biased toward basic residues. Positions 98–117 (EPSKDYRENHNNNKKDHSDS) are enriched in basic and acidic residues. Phosphoserine occurs at positions 115, 117, 146, and 195. Disordered stretches follow at residues 232-282 (SEET…GDDE) and 487-528 (GRDG…GKSA). The segment covering 239-252 (NKDKMECEEQKVSD) has biased composition (basic and acidic residues). The region spanning 467–513 (ENNIGNRMLQNMGWTPGSGLGRDGKGISEPIQAMQRPKGLGLGFPLP) is the G-patch domain. A compositionally biased stretch (polar residues) spans 514–528 (KSTSATTTPNAGKSA).

As to quaternary structure, interacts with DHX15. In terms of tissue distribution, testis.

Its subcellular location is the nucleus speckle. The protein resides in the nucleus. It is found in the nucleolus. Its function is as follows. Enhances the ATPase activity of DHX15 in vitro. The chain is G patch domain-containing protein 2 (GPATCH2) from Homo sapiens (Human).